Consider the following 337-residue polypeptide: Phenylalanine--tRNA ligase alpha subunit (337 aa).

Residue Glu258 participates in Mg(2+) binding.

The protein belongs to the class-II aminoacyl-tRNA synthetase family. Phe-tRNA synthetase alpha subunit type 1 subfamily. As to quaternary structure, tetramer of two alpha and two beta subunits. It depends on Mg(2+) as a cofactor.

Its subcellular location is the cytoplasm. The enzyme catalyses tRNA(Phe) + L-phenylalanine + ATP = L-phenylalanyl-tRNA(Phe) + AMP + diphosphate + H(+). The chain is Phenylalanine--tRNA ligase alpha subunit from Burkholderia cenocepacia (strain ATCC BAA-245 / DSM 16553 / LMG 16656 / NCTC 13227 / J2315 / CF5610) (Burkholderia cepacia (strain J2315)).